A 211-amino-acid polypeptide reads, in one-letter code: Large ribosomal subunit protein bL25 (211 aa).

A compositionally biased stretch (basic and acidic residues) spans 1–18; it reads MAKTHEIKAERRADEGKG. Residues 1-20 are disordered; that stretch reads MAKTHEIKAERRADEGKGAS.

This sequence belongs to the bacterial ribosomal protein bL25 family. CTC subfamily. In terms of assembly, part of the 50S ribosomal subunit; part of the 5S rRNA/L5/L18/L25 subcomplex. Contacts the 5S rRNA. Binds to the 5S rRNA independently of L5 and L18.

In terms of biological role, this is one of the proteins that binds to the 5S RNA in the ribosome where it forms part of the central protuberance. This is Large ribosomal subunit protein bL25 from Xanthomonas oryzae pv. oryzae (strain MAFF 311018).